The sequence spans 557 residues: CCR4-NOT transcription complex subunit 6 (557 aa).

LRR repeat units follow at residues 52 to 73 (HLTALHLSDNSLSRIPSDIAKL), 75 to 96 (NLVYLDLSSNKIRSLPAELGNM), 98 to 120 (SLRELHLNNNLLRVLPFELGKLF), and 121 to 143 (QLQTLGLKGNPLTQDILNLYQEP). Residues 153 to 557 (LLDNLSGTAK…VNGIHLPGRR (405 aa)) form a nuclease domain region. Mg(2+) is bound at residue glutamate 240. Positions 240, 276, 361, and 366 each coordinate substrate. A Mg(2+)-binding site is contributed by aspartate 412. Aspartate 412 functions as the Proton donor/acceptor in the catalytic mechanism. Residues asparagine 414, asparagine 481, and phenylalanine 486 each coordinate substrate.

This sequence belongs to the CCR4/nocturin family. In terms of assembly, component of the CCR4-NOT complex; distinct complexes seem to exist that differ in the participation of probably mutually exclusive catalytic subunits; the complex contains two deadenylase subunits, CNOT6 or CNOT6L, and CNOT7 or CNOT8. Interacts with CNOT7 and CNOT8. Interacts with UNR. Interacts with ZFP36L1 (via N-terminus). Interacts with ZNF335. It depends on Mg(2+) as a cofactor.

It localises to the cytoplasm. It is found in the nucleus. It catalyses the reaction Exonucleolytic cleavage of poly(A) to 5'-AMP.. Poly(A) nuclease with 3'-5' RNase activity. Catalytic component of the CCR4-NOT complex which is one of the major cellular mRNA deadenylases and is linked to various cellular processes including bulk mRNA degradation, miRNA-mediated repression, translational repression during translational initiation and general transcription regulation. Additional complex functions may be a consequence of its influence on mRNA expression. Involved in mRNA decay mediated by the major-protein-coding determinant of instability (mCRD) of the FOS gene in the cytoplasm. In the presence of ZNF335, enhances ligand-dependent transcriptional activity of nuclear hormone receptors, including RARA. The increase of ligand-dependent ESR1-mediated transcription is much smaller, if any. Mediates cell proliferation and cell survival and prevents cellular senescence. The protein is CCR4-NOT transcription complex subunit 6 (CNOT6) of Homo sapiens (Human).